A 914-amino-acid polypeptide reads, in one-letter code: Eukaryotic translation initiation factor 3 subunit C-like protein (914 aa).

A disordered region spans residues 1–44; it reads MSRFFTTGSDSESESSLSGEELVTKPVGGNYGKQPLLLSEDEED. A compositionally biased stretch (low complexity) spans 8 to 21; the sequence is GSDSESESSLSGEE. S9, S11, S13, S15, S16, S18, and S39 each carry phosphoserine. Position 99 is an N6-acetyllysine (K99). 2 disordered regions span residues 157 to 302 and 523 to 543; these read TSYK…GGEW and QLTPPEGSSKSEQDQAENEGE. S166, S178, S181, and S182 each carry phosphoserine. The span at 166-190 shows a compositional bias: acidic residues; the sequence is SADEDAEKNEEDSEGSSDEDEDEDG. The segment covering 199–216 has biased composition (basic and acidic residues); that stretch reads KKSEAPSGESRKFLKKMD. Positions 217–232 are enriched in acidic residues; it reads DEDEDSEDSEDDEDWD. Residues 261-278 show a composition bias toward basic and acidic residues; the sequence is PTTDEDKKAAEKKREDKA. Over residues 291-300 the composition is skewed to acidic residues; that stretch reads EEEEEDNEGG. A compositionally biased stretch (polar residues) spans 523–532; that stretch reads QLTPPEGSSK. T525 bears the Phosphothreonine mark. An N6-acetyllysine modification is found at K644. The PCI domain maps to 674–850; the sequence is FHLHINLELL…QTVVMHRTEP (177 aa). The disordered stretch occupies residues 886–914; that stretch reads FRDQKDGYRKNEGYMRRGGYRQQQSQTAY. The span at 887–900 shows a compositional bias: basic and acidic residues; the sequence is RDQKDGYRKNEGYM. S910 bears the Phosphoserine mark.

It belongs to the eIF-3 subunit C family. As to quaternary structure, component of the eukaryotic translation initiation factor 3 (eIF-3) complex, which is composed of 13 subunits: EIF3A, EIF3B, EIF3C, EIF3D, EIF3E, EIF3F, EIF3G, EIF3H, EIF3I, EIF3J, EIF3K, EIF3L and EIF3M. The eIF-3 complex appears to include 3 stable modules: module A is composed of EIF3A, EIF3B, EIF3G and EIF3I; module B is composed of EIF3F, EIF3H, and EIF3M; and module C is composed of EIF3C, EIF3D, EIF3E, EIF3K and EIF3L. EIF3C of module C binds EIF3B of module A and EIF3H of module B, thereby linking the three modules. EIF3J is a labile subunit that binds to the eIF-3 complex via EIF3B. The eIF-3 complex interacts with RPS6KB1 under conditions of nutrient depletion. Mitogenic stimulation leads to binding and activation of a complex composed of MTOR and RPTOR, leading to phosphorylation and release of RPS6KB1 and binding of EIF4B to eIF-3. In terms of processing, phosphorylated. Phosphorylation is enhanced upon serum stimulation.

Its subcellular location is the cytoplasm. Component of the eukaryotic translation initiation factor 3 (eIF-3) complex, which is required for several steps in the initiation of protein synthesis. The eIF-3 complex associates with the 40S ribosome and facilitates the recruitment of eIF-1, eIF-1A, eIF-2:GTP:methionyl-tRNAi and eIF-5 to form the 43S pre-initiation complex (43S PIC). The eIF-3 complex stimulates mRNA recruitment to the 43S PIC and scanning of the mRNA for AUG recognition. The eIF-3 complex is also required for disassembly and recycling of post-termination ribosomal complexes and subsequently prevents premature joining of the 40S and 60S ribosomal subunits prior to initiation. The eIF-3 complex specifically targets and initiates translation of a subset of mRNAs involved in cell proliferation, including cell cycling, differentiation and apoptosis, and uses different modes of RNA stem-loop binding to exert either translational activation or repression. The sequence is that of Eukaryotic translation initiation factor 3 subunit C-like protein (EIF3CL) from Homo sapiens (Human).